The chain runs to 739 residues: MEQTYEYAWIIPFIPLPVPMLIGAGLILFPTATKSFRRMWAFQSVLLLSIVMIFSIYLSIQQINSSSVYQYVWSWIINNDFSLDFGYLIDPLTSIMSILITTVGIMVLIYSDNYMAHDQGYLRFFAYMSFFSTSMLGLVTSSNLIQIYIFWELVGLCSYLLIGFWFTRPVAANACQKAFVTNRVGDFGLLLGILGFYWITGSFEFRDLFEIFNNLIYNNEVNFLFVTLCAVLLFAGAVAKSAQFPLHVWLPDAMEGPTPISALIHAATMVAAGIFLVARLLPLFRVIPYIMYLISVIGIITVLLGATLALAQKDIKRGLAYSTMSQLGYMMLALGMGSYRSALFHLITHAYSKALLFLGSGSIIHSMETIVGYSPAKSQNMGLMGGLRKHVPITKITFLLGTLSLCGIPPLACFWSKDEILNDSWLYSPIFAIIAWATAGLTAFYMFRIYLLTFEGHLNVHFQNYDGKHKTPFYSISLWGKNGVKKNSCLLTMNNNESTYFLSKTKYPIDKNGRKMTRPFMTIAHFEHKAVSSYPYESDNTMLFPIFVLGLFTLFVGAIGIPFNQEGVNLDILSKWLAPSINLLHPKSNNSQDWNEFLKDAVVSVSIAYFGIFIASFLYKPIYSSLKNLEFINSFVKKGPKRILWDKILNGIYDWSYNRAYIDAFYTRFFVGGIRGLAEFTHFFDRRVIDGMTNGVGVISFIVGEGIKYIGGGRISSYLFLYLAYVSVFLLVYYLLFST.

The next 16 membrane-spanning stretches (helical) occupy residues 9–29 (WIIP…LILF), 40–60 (WAFQ…YLSI), 89–109 (IDPL…MVLI), 125–145 (FAYM…SNLI), 147–167 (IYIF…FWFT), 185–205 (GDFG…SFEF), 219–239 (NEVN…GAVA), 258–278 (TPIS…FLVA), 286–306 (VIPY…LLGA), 327–347 (LGYM…FHLI), 354–374 (ALLF…VGYS), 396–416 (ITFL…CFWS), 425–445 (WLYS…TAFY), 543–563 (LFPI…GIPF), 602–622 (VVSV…YKPI), and 717–737 (SYLF…YLLF).

This sequence belongs to the complex I subunit 5 family. As to quaternary structure, NDH is composed of at least 16 different subunits, 5 of which are encoded in the nucleus.

The protein resides in the plastid. Its subcellular location is the chloroplast thylakoid membrane. The enzyme catalyses a plastoquinone + NADH + (n+1) H(+)(in) = a plastoquinol + NAD(+) + n H(+)(out). It carries out the reaction a plastoquinone + NADPH + (n+1) H(+)(in) = a plastoquinol + NADP(+) + n H(+)(out). NDH shuttles electrons from NAD(P)H:plastoquinone, via FMN and iron-sulfur (Fe-S) centers, to quinones in the photosynthetic chain and possibly in a chloroplast respiratory chain. The immediate electron acceptor for the enzyme in this species is believed to be plastoquinone. Couples the redox reaction to proton translocation, and thus conserves the redox energy in a proton gradient. The sequence is that of NAD(P)H-quinone oxidoreductase subunit 5, chloroplastic (ndhF) from Solanum tuberosum (Potato).